Reading from the N-terminus, the 316-residue chain is Probable 5-dehydro-4-deoxyglucarate dehydratase (316 aa).

This sequence belongs to the DapA family.

The enzyme catalyses 5-dehydro-4-deoxy-D-glucarate + H(+) = 2,5-dioxopentanoate + CO2 + H2O. Its pathway is carbohydrate acid metabolism; D-glucarate degradation; 2,5-dioxopentanoate from D-glucarate: step 2/2. In Corynebacterium glutamicum (strain R), this protein is Probable 5-dehydro-4-deoxyglucarate dehydratase.